We begin with the raw amino-acid sequence, 449 residues long: Phosphoglucosamine mutase (449 aa).

Ser100 functions as the Phosphoserine intermediate in the catalytic mechanism. Mg(2+) contacts are provided by Ser100, Asp241, Asp243, and Asp245. Phosphoserine is present on Ser100.

It belongs to the phosphohexose mutase family. The cofactor is Mg(2+). Post-translationally, activated by phosphorylation.

The enzyme catalyses alpha-D-glucosamine 1-phosphate = D-glucosamine 6-phosphate. Catalyzes the conversion of glucosamine-6-phosphate to glucosamine-1-phosphate. The sequence is that of Phosphoglucosamine mutase from Clostridium botulinum (strain Loch Maree / Type A3).